A 348-amino-acid chain; its full sequence is Phosphate acyltransferase (348 aa).

Belongs to the PlsX family. Homodimer. Probably interacts with PlsY.

Its subcellular location is the cytoplasm. The catalysed reaction is a fatty acyl-[ACP] + phosphate = an acyl phosphate + holo-[ACP]. It functions in the pathway lipid metabolism; phospholipid metabolism. In terms of biological role, catalyzes the reversible formation of acyl-phosphate (acyl-PO(4)) from acyl-[acyl-carrier-protein] (acyl-ACP). This enzyme utilizes acyl-ACP as fatty acyl donor, but not acyl-CoA. This is Phosphate acyltransferase from Synechocystis sp. (strain ATCC 27184 / PCC 6803 / Kazusa).